An 800-amino-acid polypeptide reads, in one-letter code: Blood-group-substance endo-1,4-beta-galactosidase (800 aa).

A signal peptide spans methionine 1–alanine 35.

This sequence belongs to the glycosyl hydrolase 98 family.

It localises to the secreted. The catalysed reaction is Endohydrolysis of (1-&gt;4)-beta-D-galactosidic linkages in blood group A and B substances.. Endo-beta-galactosidase capable of releasing both the blood group A trisaccharide (A-Tri; GalNAcalpha1--&gt;3(Fucalpha1--&gt;2)Gal) and B trisaccharide (B-Tri; Galalpha1--&gt;3(Fucalpha1--&gt;2)Gal) glycotopes from blood group A- and B-containing glycoconjugates, respectively. The chain is Blood-group-substance endo-1,4-beta-galactosidase (eabC) from Clostridium perfringens.